The following is a 242-amino-acid chain: Triosephosphate isomerase (242 aa).

Position 8 to 10 (8 to 10 (NWK)) interacts with substrate. Residue histidine 98 is the Electrophile of the active site. Glutamate 167 (proton acceptor) is an active-site residue. Residues glycine 173, serine 205, and 226-227 (GG) each bind substrate.

Belongs to the triosephosphate isomerase family. Homodimer.

The protein localises to the cytoplasm. It carries out the reaction D-glyceraldehyde 3-phosphate = dihydroxyacetone phosphate. Its pathway is carbohydrate biosynthesis; gluconeogenesis. It participates in carbohydrate degradation; glycolysis; D-glyceraldehyde 3-phosphate from glycerone phosphate: step 1/1. Its function is as follows. Involved in the gluconeogenesis. Catalyzes stereospecifically the conversion of dihydroxyacetone phosphate (DHAP) to D-glyceraldehyde-3-phosphate (G3P). The polypeptide is Triosephosphate isomerase (Mesomycoplasma hyopneumoniae (strain 7448) (Mycoplasma hyopneumoniae)).